The chain runs to 435 residues: Xylose isomerase (435 aa).

Catalysis depends on residues His99 and Asp102. Positions 230, 266, 269, 294, 305, 307, and 337 each coordinate Mg(2+).

This sequence belongs to the xylose isomerase family. Homotetramer. Mg(2+) is required as a cofactor.

The protein localises to the cytoplasm. It carries out the reaction alpha-D-xylose = alpha-D-xylulofuranose. This is Xylose isomerase (xylA) from Tetragenococcus halophilus (Pediococcus halophilus).